Reading from the N-terminus, the 485-residue chain is Cobyric acid synthase (485 aa).

The GATase cobBQ-type domain occupies 248 to 435 (RLKVAVAVPP…LHGLFESPAA (188 aa)). Catalysis depends on Cys-329, which acts as the Nucleophile. His-427 is a catalytic residue.

This sequence belongs to the CobB/CobQ family. CobQ subfamily.

Its pathway is cofactor biosynthesis; adenosylcobalamin biosynthesis. In terms of biological role, catalyzes amidations at positions B, D, E, and G on adenosylcobyrinic A,C-diamide. NH(2) groups are provided by glutamine, and one molecule of ATP is hydrogenolyzed for each amidation. This Azotobacter vinelandii (strain DJ / ATCC BAA-1303) protein is Cobyric acid synthase.